Consider the following 358-residue polypeptide: Diels-Alderase phmD (358 aa).

It belongs to the Diels-Alderase family.

Its pathway is mycotoxin biosynthesis. Diels-Alderase; part of the gene cluster that mediates the biosynthesis of the mycotoxins phomacins, leucine-derived cytochalasans with potent actin polymerization-inhibitory activities and monocot-specific antigerminative activities. The first step in the pathway is catalyzed by the hybrid PKS-NRPS phmA, assisted by the enoyl reductase phmE, that are responsible for fusion of the leucine precursor and the polyketide backbone to produce a 2-pyrrolidone intermediate. The polyketide synthase module (PKS) of phmA is responsible for the synthesis of the polyketide backbone and the downstream nonribosomal peptide synthetase (NRPS) amidates the carboxyl end of the polyketide with the leucine precursor. Because phmA lacks a designated enoylreductase (ER) domain, the required activity is provided the enoyl reductase phmE. Reduction by the hydrolyase phmG, followed by dehydration and intra-molecular Diels-Alder cyclization by the Diels-Alderase phmD then yield the required isoindolone-fused macrocycle. A number of oxidative steps catalyzed by the tailoring cytochrome P450 monooxygenase phmB, the FAD-linked oxidoreductase phmC and the short-chain dehydrogenase/reductase phmF, are further required to afford the final products, phomacin D and phomacin E. The polypeptide is Diels-Alderase phmD (Phaeosphaeria nodorum (strain SN15 / ATCC MYA-4574 / FGSC 10173) (Glume blotch fungus)).